The following is a 1183-amino-acid chain: Rab11 family-interacting protein 3 (1183 aa).

The tract at residues 423 to 448 (AEDPSTESLPRKNGQEESKSALPVST) is disordered. Residues 431–441 (LPRKNGQEESK) show a composition bias toward basic and acidic residues. EF-hand domains follow at residues 706–741 (EEQS…YGAE) and 738–773 (YGAE…ISNE). Ca(2+) contacts are provided by Asp719, Asp721, Asp723, Glu730, Asp751, Ser753, and Asp762. A coiled-coil region spans residues 902 to 1121 (ELEKDSLESE…NGQIINLSIQ (220 aa)). The segment at 911–1015 (EEQHARLRQE…LQDEADDITQ (105 aa)) is ARF-binding domain (ABD). Residues 1005–1044 (KLQDEADDITQRLNEESESRRKMSDKLSHERHTNQKEKEC) form a disordered region. The region spanning 1121 to 1183 (QGAKSLFTES…ESNPSILEVK (63 aa)) is the FIP-RBD domain.

Its subcellular location is the recycling endosome membrane. The protein resides in the cytoplasm. The protein localises to the cytoskeleton. It is found in the microtubule organizing center. It localises to the centrosome. Its subcellular location is the cleavage furrow. The protein resides in the midbody. The protein localises to the golgi apparatus membrane. It is found in the golgi apparatus. It localises to the trans-Golgi network membrane. Its function is as follows. Downstream effector molecule for Rab11 GTPase which acts as a regulator of endocytic trafficking, cytokinesis and intracellular ciliogenesis by participating in membrane delivery. This Danio rerio (Zebrafish) protein is Rab11 family-interacting protein 3 (rab11fip3).